The primary structure comprises 515 residues: Bifunctional purine biosynthesis protein PurH (515 aa).

An MGS-like domain is found at Met-1–Val-145.

Belongs to the PurH family.

The catalysed reaction is (6R)-10-formyltetrahydrofolate + 5-amino-1-(5-phospho-beta-D-ribosyl)imidazole-4-carboxamide = 5-formamido-1-(5-phospho-D-ribosyl)imidazole-4-carboxamide + (6S)-5,6,7,8-tetrahydrofolate. It carries out the reaction IMP + H2O = 5-formamido-1-(5-phospho-D-ribosyl)imidazole-4-carboxamide. Its pathway is purine metabolism; IMP biosynthesis via de novo pathway; 5-formamido-1-(5-phospho-D-ribosyl)imidazole-4-carboxamide from 5-amino-1-(5-phospho-D-ribosyl)imidazole-4-carboxamide (10-formyl THF route): step 1/1. The protein operates within purine metabolism; IMP biosynthesis via de novo pathway; IMP from 5-formamido-1-(5-phospho-D-ribosyl)imidazole-4-carboxamide: step 1/1. In Streptococcus pneumoniae (strain JJA), this protein is Bifunctional purine biosynthesis protein PurH.